The primary structure comprises 622 residues: WD repeat-containing protein 70 (622 aa).

The span at 36-55 shows a compositional bias: basic and acidic residues; that stretch reads RTAVERSKQTLEAREKEEQL. The tract at residues 36 to 141 is disordered; sequence RTAVERSKQT…DNPVKDIPDS (106 aa). Low complexity predominate over residues 67-84; it reads SSSGQKKTKASGSSSGSE. Residues 120–132 show a composition bias toward acidic residues; it reads SDDEDDEEHEDDD. WD repeat units lie at residues 148 to 187, 195 to 236, 249 to 289, 298 to 337, 344 to 383, 387 to 434, and 437 to 476; these read HGTKTVSALGLDPSGARLVTGGYDYDVRFWDFAGMDASLQ, CECH…ECVK, GHTA…KHKG, GKPVIPTCCTYSRDGKFIAAGCQDGSIQIWDRNMSVHTKF, TPGTDTSCVTFSYGGNVLATRGGDDTLKTWDIRKFKNPLN, GLEN…KIYE, and VTEASVVRCLWHPKLNQIMVGTGNGLAKVYYDPNRSQRGA. Residues 508 to 533 show a composition bias toward basic and acidic residues; it reads REPRQRSTRKQLEKDRLDPVKSHKPE. Disordered regions lie at residues 508 to 549 and 602 to 622; these read REPR…GTHG and AEVDSDEEEPDNEPEWKKRKI. Over residues 539–549 the composition is skewed to gly residues; sequence PGRGGRVGTHG. Over residues 604-614 the composition is skewed to acidic residues; the sequence is VDSDEEEPDNE.

The protein belongs to the WD repeat GAD-1 family.

The chain is WD repeat-containing protein 70 (wdr70) from Xenopus laevis (African clawed frog).